A 162-amino-acid chain; its full sequence is Phosphopantetheine adenylyltransferase (162 aa).

Substrate is bound at residue serine 9. ATP is bound by residues 9–10 and histidine 17; that span reads SF. 3 residues coordinate substrate: lysine 41, leucine 77, and lysine 91. ATP is bound by residues 92–94, glutamate 102, and 126–132; these read GLR and YAFLSSS.

Belongs to the bacterial CoaD family. As to quaternary structure, homohexamer. Mg(2+) is required as a cofactor.

Its subcellular location is the cytoplasm. The enzyme catalyses (R)-4'-phosphopantetheine + ATP + H(+) = 3'-dephospho-CoA + diphosphate. The protein operates within cofactor biosynthesis; coenzyme A biosynthesis; CoA from (R)-pantothenate: step 4/5. Its function is as follows. Reversibly transfers an adenylyl group from ATP to 4'-phosphopantetheine, yielding dephospho-CoA (dPCoA) and pyrophosphate. The polypeptide is Phosphopantetheine adenylyltransferase (Parafrankia sp. (strain EAN1pec)).